The primary structure comprises 260 residues: Hydroxyethylthiazole kinase 2 (260 aa).

Position 40 (Met40) interacts with substrate. Residues Arg116 and Thr161 each coordinate ATP. Ala188 lines the substrate pocket.

It belongs to the Thz kinase family. Requires Mg(2+) as cofactor.

The enzyme catalyses 5-(2-hydroxyethyl)-4-methylthiazole + ATP = 4-methyl-5-(2-phosphooxyethyl)-thiazole + ADP + H(+). Its pathway is cofactor biosynthesis; thiamine diphosphate biosynthesis; 4-methyl-5-(2-phosphoethyl)-thiazole from 5-(2-hydroxyethyl)-4-methylthiazole: step 1/1. Its function is as follows. Catalyzes the phosphorylation of the hydroxyl group of 4-methyl-5-beta-hydroxyethylthiazole (THZ). The polypeptide is Hydroxyethylthiazole kinase 2 (Oceanobacillus iheyensis (strain DSM 14371 / CIP 107618 / JCM 11309 / KCTC 3954 / HTE831)).